Consider the following 153-residue polypeptide: Small ribosomal subunit protein uS13 (153 aa).

This sequence belongs to the universal ribosomal protein uS13 family. Part of the 30S ribosomal subunit. Forms a loose heterodimer with protein S19. Forms two bridges to the 50S subunit in the 70S ribosome.

Its function is as follows. Located at the top of the head of the 30S subunit, it contacts several helices of the 16S rRNA. In the 70S ribosome it contacts the 23S rRNA (bridge B1a) and protein L5 of the 50S subunit (bridge B1b), connecting the 2 subunits; these bridges are implicated in subunit movement. This is Small ribosomal subunit protein uS13 from Pyrobaculum calidifontis (strain DSM 21063 / JCM 11548 / VA1).